A 234-amino-acid polypeptide reads, in one-letter code: (5-formylfuran-3-yl)methyl phosphate synthase (234 aa).

Lys-27 acts as the Schiff-base intermediate with substrate in catalysis. Residue Lys-85 is the Proton acceptor of the active site.

This sequence belongs to the MfnB family.

It catalyses the reaction 2 D-glyceraldehyde 3-phosphate = 4-(hydroxymethyl)-2-furancarboxaldehyde phosphate + phosphate + 2 H2O. It participates in cofactor biosynthesis; methanofuran biosynthesis. In terms of biological role, catalyzes the formation of 4-(hydroxymethyl)-2-furancarboxaldehyde phosphate (4-HFC-P) from two molecules of glyceraldehyde-3-P (GA-3-P). The polypeptide is (5-formylfuran-3-yl)methyl phosphate synthase (Methanosarcina mazei (strain ATCC BAA-159 / DSM 3647 / Goe1 / Go1 / JCM 11833 / OCM 88) (Methanosarcina frisia)).